The following is a 237-amino-acid chain: Ubiquitin-conjugating enzyme E2 34 (237 aa).

Residues 5–162 form the UBC core domain; the sequence is ACIKRLQKEY…FPEYVEKYNQ (158 aa). The Glycyl thioester intermediate role is filled by cysteine 87. The disordered stretch occupies residues 168–207; it reads QATTQLTTPESPQKSDTKVESEKTIDPTKGDSEGGLKERK. Over residues 180 to 204 the composition is skewed to basic and acidic residues; the sequence is QKSDTKVESEKTIDPTKGDSEGGLK. The helical transmembrane segment at 214-234 threads the bilayer; it reads LPAWIILLLVSVFGVVMALPL.

The protein belongs to the ubiquitin-conjugating enzyme family.

The protein resides in the membrane. It catalyses the reaction S-ubiquitinyl-[E1 ubiquitin-activating enzyme]-L-cysteine + [E2 ubiquitin-conjugating enzyme]-L-cysteine = [E1 ubiquitin-activating enzyme]-L-cysteine + S-ubiquitinyl-[E2 ubiquitin-conjugating enzyme]-L-cysteine.. Its pathway is protein modification; protein ubiquitination. Its function is as follows. Accepts the ubiquitin from the E1 complex and catalyzes its covalent attachment to other proteins. This Arabidopsis thaliana (Mouse-ear cress) protein is Ubiquitin-conjugating enzyme E2 34 (UBC34).